Consider the following 211-residue polypeptide: Putative transposase for insertion sequence element IS402 (211 aa).

Positions 51 to 71 (RRWGRPKTGPNPTDRARPGSK) are disordered.

It belongs to the transposase 11 family.

In terms of biological role, involved in the transposition of the insertion sequence. The sequence is that of Putative transposase for insertion sequence element IS402 from Burkholderia cepacia (Pseudomonas cepacia).